The sequence spans 432 residues: Adenylosuccinate synthetase (432 aa).

GTP is bound by residues 13 to 19 (GDEGKGK) and 41 to 43 (GHT). The active-site Proton acceptor is Asp-14. Mg(2+)-binding residues include Asp-14 and Gly-41. IMP contacts are provided by residues 14 to 17 (DEGK), 39 to 42 (NAGH), Thr-130, Arg-144, Gln-225, Thr-240, and Arg-304. The active-site Proton donor is the His-42. 300–306 (ATTGRKR) contacts substrate. GTP-binding positions include Arg-306, 332–334 (KLD), and 415–417 (STG).

Belongs to the adenylosuccinate synthetase family. Homodimer. Mg(2+) is required as a cofactor.

The protein resides in the cytoplasm. The enzyme catalyses IMP + L-aspartate + GTP = N(6)-(1,2-dicarboxyethyl)-AMP + GDP + phosphate + 2 H(+). It functions in the pathway purine metabolism; AMP biosynthesis via de novo pathway; AMP from IMP: step 1/2. Functionally, plays an important role in the de novo pathway of purine nucleotide biosynthesis. Catalyzes the first committed step in the biosynthesis of AMP from IMP. This chain is Adenylosuccinate synthetase, found in Tolumonas auensis (strain DSM 9187 / NBRC 110442 / TA 4).